Here is a 463-residue protein sequence, read N- to C-terminus: L-seryl-tRNA(Sec) selenium transferase (463 aa).

Position 295 is an N6-(pyridoxal phosphate)lysine (Lys-295).

Belongs to the SelA family. Homodecamer; pentamer of dimers. Binds only one seryl-tRNA(Sec) per dimer. Requires pyridoxal 5'-phosphate as cofactor.

It localises to the cytoplasm. The enzyme catalyses L-seryl-tRNA(Sec) + selenophosphate + H(+) = L-selenocysteinyl-tRNA(Sec) + phosphate. It functions in the pathway aminoacyl-tRNA biosynthesis; selenocysteinyl-tRNA(Sec) biosynthesis; selenocysteinyl-tRNA(Sec) from L-seryl-tRNA(Sec) (bacterial route): step 1/1. In terms of biological role, converts seryl-tRNA(Sec) to selenocysteinyl-tRNA(Sec) required for selenoprotein biosynthesis. The chain is L-seryl-tRNA(Sec) selenium transferase from Shigella boydii serotype 18 (strain CDC 3083-94 / BS512).